The primary structure comprises 635 residues: tRNA uridine 5-carboxymethylaminomethyl modification enzyme MnmG (635 aa).

Gly-15–Gly-20 serves as a coordination point for FAD. Residue Gly-276 to Phe-290 coordinates NAD(+).

This sequence belongs to the MnmG family. Homodimer. Heterotetramer of two MnmE and two MnmG subunits. The cofactor is FAD.

The protein localises to the cytoplasm. Its function is as follows. NAD-binding protein involved in the addition of a carboxymethylaminomethyl (cmnm) group at the wobble position (U34) of certain tRNAs, forming tRNA-cmnm(5)s(2)U34. This Streptococcus sanguinis (strain SK36) protein is tRNA uridine 5-carboxymethylaminomethyl modification enzyme MnmG.